The sequence spans 331 residues: Zinc finger protein 660 (331 aa).

A compositionally biased stretch (basic residues) spans 1-12; that stretch reads MRRKTRNFKHKT. Positions 1–35 are disordered; sequence MRRKTRNFKHKTVKDNKVLTEGSDQESEKDNSQCC. Serine 23 carries the post-translational modification Phosphoserine. 10 C2H2-type zinc fingers span residues 50 to 72, 78 to 100, 106 to 128, 134 to 156, 162 to 184, 190 to 212, 218 to 240, 246 to 268, 274 to 296, and 302 to 324; these read YVCT…ERIH, YKCK…RRIH, YTCS…QGIH, YECK…HRVH, YSCI…QRMH, YKCK…QRIH, YECD…QRLH, YKCN…QRVH, YKCN…LRTH, and YKCS…QRKH.

The protein belongs to the krueppel C2H2-type zinc-finger protein family.

Its subcellular location is the nucleus. Functionally, may be involved in transcriptional regulation. The sequence is that of Zinc finger protein 660 (ZNF660) from Homo sapiens (Human).